The chain runs to 341 residues: Protein MENT (341 aa).

The first 23 residues, Met-1–Ala-23, serve as a signal peptide directing secretion. Positions Ala-115–Pro-196 are disordered. The segment covering Ala-127–Pro-155 has biased composition (polar residues).

In terms of processing, phosphorylation sites are present in the extracellular medium. As to expression, plasma. Overexpressed in lymphomas.

Its subcellular location is the secreted. Functionally, involved in control of cellular proliferation. Onconcogenic modifier contributing to the tumor suppressor function of DNMT3B. This chain is Protein MENT (MENT), found in Homo sapiens (Human).